Here is a 495-residue protein sequence, read N- to C-terminus: Tyrosine 3-monooxygenase (495 aa).

Ser19 is subject to Phosphoserine; by CaMK2. Ser31 is modified (phosphoserine). Ser40 carries the post-translational modification Phosphoserine; by CaMK2 and PKA. A compositionally biased stretch (basic and acidic residues) spans 41–53 (LIEDARKEREKAE). The disordered stretch occupies residues 41 to 65 (LIEDARKEREKAEAASAASSEPGDL). Residues His328, His333, and Glu373 each contribute to the Fe cation site. Residue Ser469 is modified to Phosphoserine.

Belongs to the biopterin-dependent aromatic amino acid hydroxylase family. Homotetramer. Interacts (when phosphorylated at Ser-19) with YWHAG; one YWHAG dimer bounds to one TH tetramer this interaction may influence the phosphorylation and dephosphorylation of other sites. The cofactor is Fe(2+). In terms of processing, phosphorylated on Ser-19, Ser-31 and Ser-40 by several protein kinases with different site specificities. Phosphorylation at Ser-31 and Ser-40 leads to an increase of TH activity. Phosphorylation at Ser-40 activates the enzyme and also counteracts the feedback inhibition of TH by catecholamines. Phosphorylation of Ser-19 and Ser-31 triggers the proteasomal degradation of TH through the ubiquitin-proteasome pathway. Phosphorylation at Ser-31 facilitates transport of TH from the soma to the nerve terminals via the microtubule network. Phosphorylation at Ser-19 induces the high-affinity binding to the 14-3-3 protein YWHAG; this interaction may influence the phosphorylation and dephosphorylation of other sites. Ser-19 increases the phosphorylation at Ser-40 in a hierarchical manner, leading to increased activity.

The protein resides in the cytoplasm. It localises to the perinuclear region. The protein localises to the nucleus. Its subcellular location is the cell projection. It is found in the axon. The protein resides in the cytoplasmic vesicle. It localises to the secretory vesicle. The protein localises to the synaptic vesicle. The enzyme catalyses (6R)-L-erythro-5,6,7,8-tetrahydrobiopterin + L-tyrosine + O2 = (4aS,6R)-4a-hydroxy-L-erythro-5,6,7,8-tetrahydrobiopterin + L-dopa. The protein operates within catecholamine biosynthesis; dopamine biosynthesis; dopamine from L-tyrosine: step 1/2. Inhibited in feedback fashion by the catecholamine neurotransmitters, especially by dopamine in competition with tetrahydrobiopterin. Phosphorylation of several Ser/Thr residues in the N-terminus regulates the catalytic activity. Ser-31 and Ser-40 are readily phosphorylated to activate the catalytic activity. A Cysteine modification induced by N-ethylmaleimide (NEM), inhibits tyrosine 3-monooxygenase activity through the modification of the Cys-174. Functionally, catalyzes the conversion of L-tyrosine to L-dihydroxyphenylalanine (L-Dopa), the rate-limiting step in the biosynthesis of cathecolamines, dopamine, noradrenaline, and adrenaline. Uses tetrahydrobiopterin and molecular oxygen to convert tyrosine to L-Dopa. In addition to tyrosine, is able to catalyze the hydroxylation of phenylalanine and tryptophan with lower specificity. Positively regulates the regression of retinal hyaloid vessels during postnatal development. The chain is Tyrosine 3-monooxygenase (TH) from Canis lupus familiaris (Dog).